We begin with the raw amino-acid sequence, 749 residues long: MYGSSRHHLDSFSSNDGNAFLVQVGSRTFEAHELQKLIPQLEEAISRKDAQLRQQQSIVEGHIKRISELEGEVTTLQRECDKLRSVLEQKAQSAASPGQPPSPSPRTDQLGNDLQQKAVFPADGTQQRAKKIAVSAEPTNFENKPATLQHYNKTVAAKQMIRDAVQKNDFLKQLAKEQIIELVNCMYEMRARAGQWVIQEGEPGDRLFVVAEGELQVSREGATLGKMRAGTVMGELAILYNCTRTASVQALTDVQLWVLDRSVFQMITQRLGMERHSQIINFLSKVSIFANLTEDRISKIADVMDQDYYDGGHYILRQGEKGDAFFVINSGQVKVTQQIEGEKEAREIRILNQGDFFGERALLGDEVRTANIIAQAPGVEVLTLDRESFTKLIGDLDTLRKDYGDKERVATLVREPPSPVKIVDDFREEFANVTLKNVKRLATLGVGGFGRVELVCVNGDKSKTYALKALKKKHIVDTRQQEHIFAERNIMMETSTDWIVKLYKTFRDQKFVYMLLEVCLGGELWTTLRDRGHFDDYTARFYVACVLEGLEYLHRKNIVYRDLKPENCLLANSGYLKLVDFGFAKKLASGRKTWTFCGTPEYVSPEIILNKGHDQAADYWALGIYICELMLGRPPFQASDPMKTYTLILKGVDALEIPNRRIGKTATALVKKLCRDNPGERLGSGSGGVNDIRKHRWFMGFDWEGLRTKTLKPPILPKVNNPADVTNFDNYPPDNDVPPDEFSGWDEGF.

A coiled-coil region spans residues 30 to 96 (EAHELQKLIP…LEQKAQSAAS (67 aa)). Positions 87–111 (LEQKAQSAASPGQPPSPSPRTDQLG) are disordered. Residues 234-237 (GELA), 244-245 (RT), arginine 349, 358-361 (GERA), 368-369 (RT), and tyrosine 403 contribute to the 3',5'-cyclic GMP site. The Protein kinase domain occupies 438–698 (VKRLATLGVG…VNDIRKHRWF (261 aa)). Residues 444 to 452 (LGVGGFGRV) and lysine 468 contribute to the ATP site. The short motif at 461-473 (KSKTYALKALKKK) is the Nuclear localization signal element. Aspartate 562 acts as the Proton acceptor in catalysis. Residues 699-749 (MGFDWEGLRTKTLKPPILPKVNNPADVTNFDNYPPDNDVPPDEFSGWDEGF) enclose the AGC-kinase C-terminal domain. The tract at residues 723-749 (ADVTNFDNYPPDNDVPPDEFSGWDEGF) is disordered.

This sequence belongs to the protein kinase superfamily. AGC Ser/Thr protein kinase family. cGMP subfamily. It depends on Mg(2+) as a cofactor. In terms of processing, autophosphorylated.

Its subcellular location is the cytoplasm. It is found in the nucleus. The catalysed reaction is L-seryl-[protein] + ATP = O-phospho-L-seryl-[protein] + ADP + H(+). The enzyme catalyses L-threonyl-[protein] + ATP = O-phospho-L-threonyl-[protein] + ADP + H(+). Binding of cGMP results in enzyme activation. In terms of biological role, promotes chemoreceptor gene expression in response to increased cGMP levels by antagonizing the gene repression functions of the class II HDAC hda-4 and the mef-2 transcription factor. Regulates gene expression via recruitment of a histone deacetylase complex containing hda-2, saeg-1 and saeg-2. Represses body size and lifespan through the dbl-1 and insulin pathways, respectively. May also signal through daf-3 and/or daf-5. Role in egg-laying, dauer formation and motility. Regulates behavioral responses to various chemosensory stimuli in sensory neurons. Required for the initiation of long term adaptation to prolonged odor exposure which results in a decrease in odor seeking behavior. May regulate this process by phosphorylating tax-2, a subunit of cyclic nucleotide-gated channel tax-2/tax-4. In ASH sensory neurons, negatively regulates avoidance behavior to some bitter tastants, such as quinine, probably by phosphorylating rgs-2 and rgs-3 which are 2 regulator of G-protein signaling proteins. In AWB sensory neurons, involved in avoidance behavior to some repellent odors. In ASE left (ASEL) sensory neuron, involved in the sensing of environmental alkalinity downstream of receptor-type guanylate cyclase gcy-14. In sensory neurons, involved in the signaling pathway downstream of insulin, TGF-beta and receptor-type guanylate cyclase responsible for inducing quiescence after food intake. Might play a role in aversive olfactory learning in AWC neurons when an odor is associated with food deprivation, depending on the ins-1/age-1 signal from the AIA to the AWC neurons. Probably by regulating neuronal transmission downstream of lin-3 and receptor lin-23 and phospholipase plc-3 in ALA neurons, involved in the decrease in locomotion during the quiescent state that precedes each larval molt. In Caenorhabditis briggsae, this protein is cGMP-dependent protein kinase egl-4.